The primary structure comprises 211 residues: MGQKVNPIGFRLGVIRTWDSRWYAEADYAKLLHEDIKLRNFLKKRLFNSGVSKIEIERAASKAKINIFTARPGLIIGKKGAEVETLKKELAKLTDKEIYLNIQEVRKPELDAQLVSENVALQLERRVAFRRAMKKSVTSALKFGAKGIRITCSGRLGGAEMSRTEWYREGRVPLHTLRADIDYGFAEAKTTYGIIGVKVLIFKGEVLPGQK.

Residues 38–106 (LRNFLKKRLF…EIYLNIQEVR (69 aa)) enclose the KH type-2 domain.

It belongs to the universal ribosomal protein uS3 family. Part of the 30S ribosomal subunit. Forms a tight complex with proteins S10 and S14.

In terms of biological role, binds the lower part of the 30S subunit head. Binds mRNA in the 70S ribosome, positioning it for translation. The protein is Small ribosomal subunit protein uS3 of Geobacter metallireducens (strain ATCC 53774 / DSM 7210 / GS-15).